A 313-amino-acid polypeptide reads, in one-letter code: Beta-ketoacyl-[acyl-carrier-protein] synthase III (313 aa).

Catalysis depends on residues Cys-112 and His-238. Residues 239 to 243 (QANIR) form an ACP-binding region. Asn-268 is a catalytic residue.

Belongs to the thiolase-like superfamily. FabH family. As to quaternary structure, homodimer.

It is found in the cytoplasm. It catalyses the reaction malonyl-[ACP] + acetyl-CoA + H(+) = 3-oxobutanoyl-[ACP] + CO2 + CoA. Its pathway is lipid metabolism; fatty acid biosynthesis. Functionally, catalyzes the condensation reaction of fatty acid synthesis by the addition to an acyl acceptor of two carbons from malonyl-ACP. Catalyzes the first condensation reaction which initiates fatty acid synthesis and may therefore play a role in governing the total rate of fatty acid production. Possesses both acetoacetyl-ACP synthase and acetyl transacylase activities. Its substrate specificity determines the biosynthesis of branched-chain and/or straight-chain of fatty acids. This Staphylococcus haemolyticus (strain JCSC1435) protein is Beta-ketoacyl-[acyl-carrier-protein] synthase III.